The following is a 41-amino-acid chain: Photosystem II reaction center protein L (41 aa).

A helical membrane pass occupies residues 20–40; it reads SLYLGLLLVFVVGLLFSSYFL.

It belongs to the PsbL family. PSII is composed of 1 copy each of membrane proteins PsbA, PsbB, PsbC, PsbD, PsbE, PsbF, PsbH, PsbI, PsbJ, PsbK, PsbL, PsbM, PsbT, PsbX, PsbY, PsbZ, Psb30/Ycf12, peripheral proteins PsbO, CyanoQ (PsbQ), PsbU, PsbV and a large number of cofactors. It forms dimeric complexes.

It localises to the cellular thylakoid membrane. One of the components of the core complex of photosystem II (PSII). PSII is a light-driven water:plastoquinone oxidoreductase that uses light energy to abstract electrons from H(2)O, generating O(2) and a proton gradient subsequently used for ATP formation. It consists of a core antenna complex that captures photons, and an electron transfer chain that converts photonic excitation into a charge separation. This subunit is found at the monomer-monomer interface and is required for correct PSII assembly and/or dimerization. This is Photosystem II reaction center protein L from Synechococcus sp. (strain JA-3-3Ab) (Cyanobacteria bacterium Yellowstone A-Prime).